Consider the following 430-residue polypeptide: Gamma-glutamyl phosphate reductase (430 aa).

This sequence belongs to the gamma-glutamyl phosphate reductase family.

The protein localises to the cytoplasm. It catalyses the reaction L-glutamate 5-semialdehyde + phosphate + NADP(+) = L-glutamyl 5-phosphate + NADPH + H(+). It participates in amino-acid biosynthesis; L-proline biosynthesis; L-glutamate 5-semialdehyde from L-glutamate: step 2/2. Its function is as follows. Catalyzes the NADPH-dependent reduction of L-glutamate 5-phosphate into L-glutamate 5-semialdehyde and phosphate. The product spontaneously undergoes cyclization to form 1-pyrroline-5-carboxylate. The chain is Gamma-glutamyl phosphate reductase from Corynebacterium diphtheriae (strain ATCC 700971 / NCTC 13129 / Biotype gravis).